Reading from the N-terminus, the 346-residue chain is tRNA N6-adenosine threonylcarbamoyltransferase (346 aa).

Positions 110 and 114 each coordinate Fe cation. Substrate is bound by residues 132-136, aspartate 165, glycine 178, and asparagine 274; that span reads LLSGG. Aspartate 298 lines the Fe cation pocket.

It belongs to the KAE1 / TsaD family. Requires Fe(2+) as cofactor.

The protein resides in the cytoplasm. The catalysed reaction is L-threonylcarbamoyladenylate + adenosine(37) in tRNA = N(6)-L-threonylcarbamoyladenosine(37) in tRNA + AMP + H(+). Functionally, required for the formation of a threonylcarbamoyl group on adenosine at position 37 (t(6)A37) in tRNAs that read codons beginning with adenine. Is involved in the transfer of the threonylcarbamoyl moiety of threonylcarbamoyl-AMP (TC-AMP) to the N6 group of A37, together with TsaE and TsaB. TsaD likely plays a direct catalytic role in this reaction. This Borreliella afzelii (strain PKo) (Borrelia afzelii) protein is tRNA N6-adenosine threonylcarbamoyltransferase.